The sequence spans 146 residues: Anti-sigma F factor (146 aa).

The protein belongs to the anti-sigma-factor family.

The enzyme catalyses L-seryl-[protein] + ATP = O-phospho-L-seryl-[protein] + ADP + H(+). It carries out the reaction L-threonyl-[protein] + ATP = O-phospho-L-threonyl-[protein] + ADP + H(+). In terms of biological role, binds to sigma F and blocks its ability to form an RNA polymerase holoenzyme (E-sigma F). Phosphorylates SpoIIAA on a serine residue. This phosphorylation may enable SpoIIAA to act as an anti-anti-sigma factor that counteracts SpoIIAB and thus releases sigma F from inhibition. The polypeptide is Anti-sigma F factor (Bacillus licheniformis (strain ATCC 14580 / DSM 13 / JCM 2505 / CCUG 7422 / NBRC 12200 / NCIMB 9375 / NCTC 10341 / NRRL NRS-1264 / Gibson 46)).